Reading from the N-terminus, the 283-residue chain is Gap junction beta-1 protein (283 aa).

The Cytoplasmic portion of the chain corresponds to 1-22; that stretch reads MNWTGLYTLLSGVNRHSTAIGR. The helical transmembrane segment at 23 to 45 threads the bilayer; sequence VWLSVIFIFRIMVLVVAAESVWG. Over 46–75 the chain is Extracellular; it reads DEKSSFICNTLQPGCNSVCYDHFFPISHVR. A helical transmembrane segment spans residues 76-95; the sequence is LWSLQLILVSTPALLVAMHV. The Cytoplasmic portion of the chain corresponds to 96 to 130; that stretch reads AHQQHIEKKMLRLEGHGDPLHLEEVKRHKVHISGT. A helical transmembrane segment spans residues 131–153; that stretch reads LWWTYVISVVFRLLFEAVFMYVF. At 154–191 the chain is on the extracellular side; sequence YLLYPGYAMVRLVKCEAFPCPNTVDCFVSRPTEKTVFT. A helical membrane pass occupies residues 192–214; that stretch reads VFMLAASGICIILNVAEVVYLII. Over 215 to 283 the chain is Cytoplasmic; the sequence is RACARRAQRR…AEKSDRCSAC (69 aa). Residues serine 233, serine 258, serine 266, and serine 277 each carry the phosphoserine modification.

This sequence belongs to the connexin family. Beta-type (group I) subfamily. In terms of assembly, a connexon is composed of a hexamer of connexins. Interacts with CNST.

Its subcellular location is the cell membrane. It is found in the cell junction. The protein resides in the gap junction. One gap junction consists of a cluster of closely packed pairs of transmembrane channels, the connexons, through which materials of low MW diffuse from one cell to a neighboring cell. The protein is Gap junction beta-1 protein (Gjb1) of Mus musculus (Mouse).